The sequence spans 196 residues: Holliday junction branch migration complex subunit RuvA (196 aa).

The segment at 1 to 63 is domain I; that stretch reads MINKIYGKIV…DDDVKLFGFL (63 aa). Residues 64–142 are domain II; it reads NISEREVFEN…KGDESSSYML (79 aa). Position 143 (lysine 143) is a region of interest, flexible linker. Positions 143 to 196 are domain III; that stretch reads KFKELEQSIVNMGFDRKLVVVAFREIMLSDKFLILKEAEQEQFLFTETLKRLSV.

This sequence belongs to the RuvA family. Homotetramer. Forms an RuvA(8)-RuvB(12)-Holliday junction (HJ) complex. HJ DNA is sandwiched between 2 RuvA tetramers; dsDNA enters through RuvA and exits via RuvB. An RuvB hexamer assembles on each DNA strand where it exits the tetramer. Each RuvB hexamer is contacted by two RuvA subunits (via domain III) on 2 adjacent RuvB subunits; this complex drives branch migration. In the full resolvosome a probable DNA-RuvA(4)-RuvB(12)-RuvC(2) complex forms which resolves the HJ.

Its subcellular location is the cytoplasm. Functionally, the RuvA-RuvB-RuvC complex processes Holliday junction (HJ) DNA during genetic recombination and DNA repair, while the RuvA-RuvB complex plays an important role in the rescue of blocked DNA replication forks via replication fork reversal (RFR). RuvA specifically binds to HJ cruciform DNA, conferring on it an open structure. The RuvB hexamer acts as an ATP-dependent pump, pulling dsDNA into and through the RuvAB complex. HJ branch migration allows RuvC to scan DNA until it finds its consensus sequence, where it cleaves and resolves the cruciform DNA. This chain is Holliday junction branch migration complex subunit RuvA, found in Borrelia recurrentis (strain A1).